The sequence spans 199 residues: UPF0056 membrane protein bbp_399 (199 aa).

6 helical membrane-spanning segments follow: residues 7–29 (VTIL…SILK), 39–58 (ILIR…LFAG), 71–93 (TVSV…PTYE), 108–130 (FLVP…MLLS), 137–156 (ILYL…VILL), and 176–198 (LMGL…SWFY).

It belongs to the UPF0056 (MarC) family.

It localises to the cell membrane. The sequence is that of UPF0056 membrane protein bbp_399 from Buchnera aphidicola subsp. Baizongia pistaciae (strain Bp).